Here is a 715-residue protein sequence, read N- to C-terminus: Targeting protein for Xklp2-B (715 aa).

The interval 36-167 (NAENIPPDQK…LTMPATPTVL (132 aa)) is disordered. Positions 47–56 (LSETSVNAEQ) are enriched in polar residues. Positions 85 to 103 (QTKRSARRMSKKHRQKILL) are enriched in basic residues. Over residues 104–115 (KMKETHLEKETA) the composition is skewed to basic and acidic residues. Residues 141-152 (QPTSSHHGTTSP) show a composition bias toward polar residues. The residue at position 204 (Ser-204) is a Phosphoserine; by plk1. Disordered stretches follow at residues 260–291 (PPTS…EEAS) and 314–337 (RSRQ…TNPK).

It belongs to the TPX2 family. Associates with microtubules. Interacts with aurka and plk1. Interacts with kif15. In terms of processing, phosphorylated during mitosis. Hyperphosphorylated upon assembly of microtubules.

Its subcellular location is the nucleus. The protein localises to the cytoplasm. It localises to the cytoskeleton. The protein resides in the spindle. It is found in the spindle pole. Its function is as follows. Spindle assembly factor. Required for normal assembly of mitotic spindles. Mediates the binding kif15 and aurka to spindle microtubules. Required for targeting kif15 to microtubule minus ends. Activates aurka by promoting its autophosphorylation and protects the phosphorylated residue against dephosphorylation. The polypeptide is Targeting protein for Xklp2-B (tpx2-b) (Xenopus laevis (African clawed frog)).